Reading from the N-terminus, the 63-residue chain is Large ribosomal subunit protein uL29 (63 aa).

It belongs to the universal ribosomal protein uL29 family.

The chain is Large ribosomal subunit protein uL29 from Bdellovibrio bacteriovorus (strain ATCC 15356 / DSM 50701 / NCIMB 9529 / HD100).